Here is a 249-residue protein sequence, read N- to C-terminus: Zinc import ATP-binding protein ZnuC (249 aa).

One can recognise an ABC transporter domain in the interval 1–219 (MRLVSLRNAT…PEYQALFGSG (219 aa)). Residue 36–43 (GPNGSGKS) coordinates ATP.

It belongs to the ABC transporter superfamily. Zinc importer (TC 3.A.1.15.5) family. The complex is composed of two ATP-binding proteins (ZnuC), two transmembrane proteins (ZnuB) and a solute-binding protein (ZnuA).

The protein localises to the cell inner membrane. The catalysed reaction is Zn(2+)(out) + ATP(in) + H2O(in) = Zn(2+)(in) + ADP(in) + phosphate(in) + H(+)(in). Its function is as follows. Part of the ABC transporter complex ZnuABC involved in zinc import. Responsible for energy coupling to the transport system. The polypeptide is Zinc import ATP-binding protein ZnuC (Ruegeria sp. (strain TM1040) (Silicibacter sp.)).